Here is a 508-residue protein sequence, read N- to C-terminus: ATP synthase subunit alpha, chloroplastic (508 aa).

172-179 (GDRQTGKT) serves as a coordination point for ATP.

The protein belongs to the ATPase alpha/beta chains family. As to quaternary structure, F-type ATPases have 2 components, CF(1) - the catalytic core - and CF(0) - the membrane proton channel. CF(1) has five subunits: alpha(3), beta(3), gamma(1), delta(1), epsilon(1). CF(0) has four main subunits: a, b, b' and c.

It is found in the plastid. The protein localises to the chloroplast thylakoid membrane. The enzyme catalyses ATP + H2O + 4 H(+)(in) = ADP + phosphate + 5 H(+)(out). In terms of biological role, produces ATP from ADP in the presence of a proton gradient across the membrane. The alpha chain is a regulatory subunit. The sequence is that of ATP synthase subunit alpha, chloroplastic from Angiopteris evecta (Mule's foot fern).